The chain runs to 254 residues: Protein Thf1 (254 aa).

A coiled-coil region spans residues 183 to 217 (SDKLQKDLDLYRSNLEKMEQARITMEEAIQADRRK). Over residues 213–227 (ADRRKREQREQEKLA) the composition is skewed to basic and acidic residues. A disordered region spans residues 213–254 (ADRRKREQREQEKLAKAAAAEAPAALEASSDNPEPETSETPS). Over residues 228-240 (KAAAAEAPAALEA) the composition is skewed to low complexity. Acidic residues predominate over residues 245 to 254 (PEPETSETPS).

The protein belongs to the THF1 family.

Functionally, may be involved in photosynthetic membrane biogenesis. In Synechococcus elongatus (strain ATCC 33912 / PCC 7942 / FACHB-805) (Anacystis nidulans R2), this protein is Protein Thf1.